Reading from the N-terminus, the 205-residue chain is MNEQLINRTMAFAGILQAIAQVQHLARHGELDNAELAASLNTILVTNPDNTADVYQDKIVLQKGYKLILNQLGDSSQKDVEITRYLVGVLALERKLVRSNSGLGMLAERINQVNRQLHHFAITDEQVIANLASIYSDIISNLGPKIQISGNPVCLQRPIIQQKIRALLLAAMRSAVLWRQLGGKRRHLVFARKAIVDTAKKSLTL.

The protein belongs to the HflD family.

The protein resides in the cytoplasm. Its subcellular location is the cell inner membrane. This chain is High frequency lysogenization protein HflD homolog, found in Shewanella baltica (strain OS223).